Consider the following 729-residue polypeptide: Sodium-dependent neutral amino acid transporter B(0)AT2 (729 aa).

At 1-69 (MPKNSKVVKR…ERPAWNSKLQ (69 aa)) the chain is on the cytoplasmic side. Phosphoserine is present on residues S25 and S55. The interval 42 to 61 (DVQEEKDTDAEDGSEADDER) is disordered. The segment covering 43 to 59 (VQEEKDTDAEDGSEADD) has biased composition (acidic residues). A run of 3 helical transmembrane segments spans residues 70–90 (YILAQVGFSVGLGNVWRFPYL), 98–117 (AYLLPYLILLLVIGIPLFFL), and 142–162 (GIGFASCVVCYFVALYYNVII). The Extracellular portion of the chain corresponds to 163–225 (GWTLFYFSQS…SSISDSGGLN (63 aa)). An N-linked (GlcNAc...) asparagine glycan is attached at N187. A run of 2 helical transmembrane segments spans residues 226–244 (WKMTVCLLVAWVMVCLAMI) and 253–270 (IMYFSSLFPYVVLICFLI). N-linked (GlcNAc...) asparagine glycosylation is present at N276. Transmembrane regions (helical) follow at residues 306-323 (VFFALGLGFGGVIAFSSY) and 335-356 (VLVSFINFFTSVLATLVVFAVL). Over 357–452 (GFKANIVNEK…FIAFTEAMTH (96 aa)) the chain is Extracellular. N-linked (GlcNAc...) asparagine glycans are attached at residues N383 and N394. Helical transmembrane passes span 453 to 472 (FPASPFWSVMFFLMLINLGL), 496 to 514 (ILTVICCLLAFCIGLIFVQ), 530 to 550 (TLPLLIVVILENIAVSFVYGI), 571 to 592 (YMWKYISPLMLLTLLIASIVNM), and 620 to 642 (VVCFSLMVLAILPVPVVFIIRRC). Over 643 to 729 (NLIDDSSGNL…DMPDMPESDL (87 aa)) the chain is Cytoplasmic. A phosphoserine mark is found at S687, S699, and S701.

Belongs to the sodium:neurotransmitter symporter (SNF) (TC 2.A.22) family. SLC6A15 subfamily. As to expression, significant expressed in brain, lung and kidney. In brain, mainly expressed int the cortex, the cerebellum and the brain stem.

The protein resides in the membrane. It catalyses the reaction L-pipecolate(in) + Na(+)(in) = L-pipecolate(out) + Na(+)(out). The catalysed reaction is L-leucine(in) + Na(+)(in) = L-leucine(out) + Na(+)(out). It carries out the reaction L-isoleucine(in) + Na(+)(in) = L-isoleucine(out) + Na(+)(out). The enzyme catalyses L-methionine(in) + Na(+)(in) = L-methionine(out) + Na(+)(out). It catalyses the reaction L-proline(in) + Na(+)(in) = L-proline(out) + Na(+)(out). The catalysed reaction is L-alanine(in) + Na(+)(in) = L-alanine(out) + Na(+)(out). It carries out the reaction L-asparagine(in) + Na(+)(in) = L-asparagine(out) + Na(+)(out). The enzyme catalyses L-valine(in) + Na(+)(in) = L-valine(out) + Na(+)(out). It catalyses the reaction L-cysteine(in) + Na(+)(in) = L-cysteine(out) + Na(+)(out). The catalysed reaction is L-glutamine(in) + Na(+)(in) = L-glutamine(out) + Na(+)(out). It carries out the reaction L-serine(in) + Na(+)(in) = L-serine(out) + Na(+)(out). The enzyme catalyses L-threonine(in) + Na(+)(in) = L-threonine(out) + Na(+)(out). It catalyses the reaction L-phenylalanine(in) + Na(+)(in) = L-phenylalanine(out) + Na(+)(out). Functionally, functions as a sodium-dependent neutral amino acid transporter. Exhibits preference for methionine and for the branched-chain amino acids, particularly leucine, valine and isoleucine. Can also transport low-affinity substrates such as alanine, phenylalanine, glutamine and pipecolic acid. Mediates the saturable, pH-sensitive and electrogenic cotransport of proline and sodium ions with a stoichiometry of 1:1. May have a role as transporter for neurotransmitter precursors into neurons. In contrast to other members of the neurotransmitter transporter family, does not appear to be chloride-dependent. The polypeptide is Sodium-dependent neutral amino acid transporter B(0)AT2 (Slc6a15) (Mus musculus (Mouse)).